A 4265-amino-acid polypeptide reads, in one-letter code: MEQPNSKGYSLGRTPQGPECSSAPAVQVGTHRGLEYNPGKILPGSDYGLGNPPALDPKLPHLPLPPAPPTLSDLGQPRKSPLTGTDKKYPLMKQRGFYSDILSPGTLDQLGEVCRGPRMSQNLLRQADLDKFTPRVGSFEVPEDFQERMEQQCIGSTTRLLAQTDFPLQAYEPKMQVPFQVLPGQHPRKIEIERRKQQYLSLDIEQLLFSQGIDSNKLMPRHLDHQHPQTIEQGHDPIFPIYLPLKVFDNEDFDCRTPREWINMGLEPGSLDRKPVPGKALLPTDDFLGHEDPKSQKLKYKWCEVGVLDYDEEKKLYLVHKTDEKGLVRDEMGRPILNAGVTTEGRPPLQVCQYWVPRIQLLFCAEDPCMFAQRVVQANALRKNTEALLLYNLYVDCMPSDGQHVISEQSLSKIKQWALSTPRMRKGPSVLEHLSSLAREVSLDYERSMNKINFDHVVSSKPETFSYVTLPKKEEEQVPERGLVSVPKYHFWEQKEDFTFVSLLTRPEVITALSKVRAECNKVTAMSLFHSSLSKYSHLEEFEQIQSQTFSQVQMFLKDSWISSLKVAMRSSLRDMSKGWYNLYETNWEVYLMSKLRKLMELVKYMLQDTLRFLVQDSLASFSQFISDTCCSVLNCTDDMVWGDDLINSPYRPRKNPLFIMDLVLDSSGVHYSTPLEQFEASLLNLFDKGILATHAVPQLEKLVMEDIFISGDPLLESVGLHEPLVEELRATIASAVSKAMIPLQAYAKEYRKYLELNNNDIASFLKTYQTQGLLAQEVREVVLTHLREKEILDSSLPSSIIIGPFYINTDNVKQSLSKKRKALATSVLDILAKNLHKEVDSICEEFRSISRKIYEKPNSIEELAELREWMKGIPERLVGLEERIVKVMDDYQVMDEFLYNLSSDDFNDKWIASNWPSKILGQIELVQQQHVEDEEKFRKIQIMDQNNFQEKLEGLQLVVAGFSIHVEISRAHEIANEVRRVKKQLKDCQQLAMLYNNRERIFSLPITNYDKLSRMVKEFQPYLDLWTTASDWLRWSESWMNDPLSAIDAEQLEKNVVEAFKTMHKCVKQFKDMPACQEVALDIRARIEEFKPYIPLIQGLRNPGMRIRHWETLSNQININVRPKANLTFARCLEMNLQDHIESISKVAEVAGKEYAIEQALDKMEKEWSTILFNVLPYKATDTYILKSPDEASQLLDDHIVMTQNMSFSPYKKPFEQRINSWENKLKLTQEVLEEWLNCQRSWLYLEPIFSSEDINQQLPVESKRYQTMERIWKKIMKNAYENREVINVCSDLRMLDSLRDCNKILDLVQKGLSEYLETKRSAFPRFYFLSDDELLEILSQTKDPTAVQPHLRKCFENIARLLFQEDLEITHMYSAEGEEVQLCFSIYPSSNVEDWLREVERSMKASVHDIIEKAIRAYPTMPRTQWVLNWPGQVTIAGCQTYWTMEVAEALEAGNLRSQLFPQLCQQLSDLVALVRGKLSRMQRAVLSALIVIEVHAKDVVSKLIQENVVSVNDFQWISQLRYYWTNNDLYIRAVNAEFIYGYEYLGNSGRLVITPLTDRCYLTLTGALHLKFGGAPAGPAGTGKTETTKDLGKALAIQTVVFNCSDQLDFMAMGKFFKGLASAGAWACFDEFNRIDIEVLSVVAQQITTIQKAQQQRVERFMFEGVEIPLVPSCAVFITMNPGYAGRTELPDNLKALFRPVAMMVPDYAMITEISLYSFGFNEASVLAKKITTTFKLSSEQLSSQDHYDFGMRAVKTVISAAGNLKRENPSMNEELICLRAIRDVNVPKFLQEDLKLFSGIVSDLFPTIKEEDTDYGILDEAIREACRNSNLKDVEGFLTKCIQLYETTVVRHGLMLVGPTGSGKSTCYRVLAAAMTSLKGQPSISGGMYEAVNYYVLNPKSITMGQLYGEFDLLTHEWTDGIFSSFIRAGAITSDTNKKWYMFDGPVDAIWIENMNTVLDDNKKLCLSSGEIIKLTEAMTMMFEVQDLAVASPATVSRCGMVYLEPSILGLMPFIECWLRKLPPLLKPYEEHFKALFVSFLEESISFVRSSVKEVIASTNCNLTMSLLKLLDCFFKPFLPREGLKKIPSEKLSRIVELIEPWFIFSLIWSVGATGDSSGRTSFSHWLRLKMENEQLTLLFPEEGLVFDYRLEDAGISGTNDSEDEEEEYKQVAWVKWMDSSAPFTMVPDTNYCNIIVPTMDTVQMSHLLDMLLTNKKPVLCIGPTGTGKTLTISDKLLKNLALDYISHFLTFSARTSANQTQDFIDSKLDKRRKGVFGPPLGRNFIFFIDDLNMPALETYGAQPPIELLRQWMDHGGWYDRKIIGAFKNLVDINFVCAMGPPGGGRNTVTPRLMRHFNYLSFAEMDEVSKKRIFSTILGNWLDGLLGEKSYRERVPGAPHIAHFTEPLVEATIMVYATITSQLLPTPAKSHYTFNLRDLSKVFQGMLMADPAKVEDQVQLLRLWYHENCRVFRDRLVNEEDRSWFDQLLKRCMEQWEVTFNKVCPFQPILYGDFMSPGSDVKSYELITSESKMMQVIEEYIEDYNQINTAKLKLVLFMDAMSHICRISRTLRQALGNALLLGVGGSGRSSLTRLASHMAEYECFQIELSKNYGMSEWRDDVKKVLLKAGLQNLPITFLFSDTQIKNESFLEDINNVLNSGDIPNLYTADEQDQIVSTMRPYIQEQGLQPTKANLMAAYTGRVRSNIHMVLCMSPIGEVFRARLRQFPSLVNCCTIDWFNEWPAEALKSVATVFLNEIPELESSQEEIQGLIQVCVYIHQSVSKKCIEYLAELTRHNYVTPKSYLELLHIFSILIGQKKLELKTAKNRMKSGLDKLLRTSEDVAKMQEDLESMHPLLEEAAKDTMLTMEQIKVDTAIAEETRNSVQTEEIKANEKAKKAQAIADDAQKDLDEALPALDAALASLRNLNKNDVTEVRAMQRPPPGVKLVIEAVCIMKGIKPKKVPGEKPGTKVDDYWEPGKGLLQDPGHFLESLFKFDKDNIGDVVIKAIQPYIDNEEFQPATIAKVSKACTSICQWVRAMHKYHFVAKAVEPKRQALLEAQDDLGVTQRILDEAKQRLREVEDGIATMQAKYRECITKKEELELKCEQCEQRLGRAGKLINGLSDEKVRWQETVENLQYMLNNISGDVLVAAGFVAYLGPFTGQYRTVLYDSWVKQLRSHNVPHTSEPTLIGTLGNPVKIRSWQIAGLPNDTLSVENGVINQFSQRWTHFIDPQSQANKWIKNMEKDNGLDVFKLSDRDFLRSMENAIRFGKPCLLENVGEELDPALEPVLLKQTYKQQGNTVLKLGDTVIPYHEDFRMYITTKLPNPHYTPEISTKLTLINFTLSPSGLEDQLLGQVVAEERPDLEEAKNQLIISNAKMRQELKDIEDQILYRLSSSEGNPVDDMELIKVLEASKMKAAEIQAKVRIAEQTEKDIDLTRMEYIPVAIRTQILFFCVSDLANVDPMYQYSLEWFLNIFLSGIANSERADNLKKRISNINRYLTYSLYSNVCRSLFEKHKLMFAFLLCVRIMMNEGKINQSEWRYLLSGGSISIMTENPAPDWLSDRAWRDILALSNLPTFSSFSSDFVKHLSEFRVIFDSLEPHREPLPGIWDQYLDQFQKLLVLRCLRGDKVTNAMQDFVATNLEPRFIEPQTANLSVVFKDSNSTTPLIFVLSPGTDPAADLYKFAEEMKFSKKLSAISLGQGQGPRAEAMMRSSIERGKWVFFQNCHLAPSWMPALERLIEHINPDKVHRDFRLWLTSLPSNKFPVSILQNGSKMTIEPPRGVRANLLKSYSSLGEDFLNSCHKVMEFKSLLLSLCLFHGNALERRKFGPLGFNIPYEFTDGDLRICISQLKMFLDEYDDIPYKVLKYTAGEINYGGRVTDDWDRRCIMNILEDFYNPDVLSPEHSYSASGIYHQIPPTYDLHGYLSYIKSLPLNDMPEIFGLHDNANITFAQNETFALLGTIIQLQPKSSSAGSQGREEIVEDVTQNILLKVPEPINLQWVMAKYPVLYEESMNTVLVQEVIRYNRLLQVITQTLQDLLKALKGLVVMSSQLELMAASLYNNTVPELWSAKAYPSLKPLSSWVMDLLQRLDFLQAWIQDGIPAVFWISGFFFPQAFLTGTLQNFARKFVISIDTISFDFKVMFEAPSELTQRPQVGCYIHGLFLEGARWDPEAFQLAESQPKELYTEMAVIWLLPTPNRKAQDQDFYLCPIYKTLTRAGTLSTTGHSTNYVIAVEIPTHQPQRHWIKRGVALICALDY.

Residues 1–88 are disordered; sequence MEQPNSKGYS…KSPLTGTDKK (88 aa). Residues 1–1542 form a stem region; that stretch reads MEQPNSKGYS…YIRAVNAEFI (1542 aa). Residues 60–69 are compositionally biased toward pro residues; it reads PHLPLPPAPP. 4 AAA regions span residues 1543 to 1764, 1824 to 2057, 2189 to 2449, and 2547 to 2799; these read YGYE…VISA, EAIR…SSVK, TMVP…VFQG, and DYNQ…LTRH. Positions 1581-1588 match the GPAGTGKT motif motif; that stretch reads GPAGTGKT. Residue 1581–1588 participates in ATP binding; it reads GPAGTGKT. Positions 1631–1637 match the CFDEFNR motif motif; that stretch reads CFDEFNR. ATP-binding positions include 1862–1869, 2227–2234, and 2586–2593; these read GPTGSGKS, GPTGTGKT, and GVGGSGRS. The stalk stretch occupies residues 2814–3112; the sequence is FSILIGQKKL…EELELKCEQC (299 aa). Residues 3074–3122 are a coiled coil; sequence LDEAKQRLREVEDGIATMQAKYRECITKKEELELKCEQCEQRLGRAGKL. AAA stretches follow at residues 3197 to 3427 and 3640 to 3859; these read LGNP…EIQA and MQDF…QLKM.

The protein belongs to the dynein heavy chain family. In terms of assembly, consists of at least two heavy chains and a number of intermediate and light chains. Expressed primarily in trachea and testis, 2 tissues containing axonemal structures. Also expressed in brain.

It is found in the cytoplasm. The protein resides in the cytoskeleton. The protein localises to the cilium axoneme. It localises to the cell projection. Its subcellular location is the cilium. It is found in the flagellum. Force generating protein of cilia required for sperm flagellum motility. Produces force towards the minus ends of microtubules. Dynein has ATPase activity; the force-producing power stroke is thought to occur on release of ADP. Required in spermatozoa for the formation of the inner dynein arms and biogenesis of the axoneme. This chain is Dynein axonemal heavy chain 1, found in Homo sapiens (Human).